The sequence spans 309 residues: Sulfur oxygenase/reductase (309 aa).

Cys-31 is modified (cysteine persulfide). Fe cation-binding residues include His-86, His-90, and Glu-114.

As to quaternary structure, homoicosatetramer. The resulting structure is a hollow sphere where catalysis takes place in the inside cavity. It depends on Fe cation as a cofactor.

It is found in the cytoplasm. It catalyses the reaction 4 sulfur + O2 + 4 H2O = 2 hydrogen sulfide + 2 sulfite + 6 H(+). With respect to regulation, inhibited by zinc. Its function is as follows. Catalyzes the simultaneous oxidation and reduction of elemental sulfur in the presence of oxygen, with sulfite and hydrogen sulfide as products. The chain is Sulfur oxygenase/reductase (sor) from Acidianus ambivalens (Desulfurolobus ambivalens).